Consider the following 453-residue polypeptide: Iron-sulfur cluster assembly SufBD family protein slr0076 (453 aa).

This sequence belongs to the iron-sulfur cluster assembly SufBD family.

The protein is Iron-sulfur cluster assembly SufBD family protein slr0076 of Synechocystis sp. (strain ATCC 27184 / PCC 6803 / Kazusa).